Reading from the N-terminus, the 179-residue chain is Adenylyl-sulfate kinase (179 aa).

13 to 20 (GLSGAGKS) lines the ATP pocket. The active-site Phosphoserine intermediate is the Ser87.

It belongs to the APS kinase family.

It carries out the reaction adenosine 5'-phosphosulfate + ATP = 3'-phosphoadenylyl sulfate + ADP + H(+). It functions in the pathway sulfur metabolism; hydrogen sulfide biosynthesis; sulfite from sulfate: step 2/3. Catalyzes the synthesis of activated sulfate. The chain is Adenylyl-sulfate kinase from Paraburkholderia xenovorans (strain LB400).